The following is a 446-amino-acid chain: Exodeoxyribonuclease 7 large subunit (446 aa).

Belongs to the XseA family. In terms of assembly, heterooligomer composed of large and small subunits.

It is found in the cytoplasm. It carries out the reaction Exonucleolytic cleavage in either 5'- to 3'- or 3'- to 5'-direction to yield nucleoside 5'-phosphates.. Its function is as follows. Bidirectionally degrades single-stranded DNA into large acid-insoluble oligonucleotides, which are then degraded further into small acid-soluble oligonucleotides. This is Exodeoxyribonuclease 7 large subunit from Streptococcus agalactiae serotype Ia (strain ATCC 27591 / A909 / CDC SS700).